An 80-amino-acid chain; its full sequence is U-actitoxin-Avd9a (80 aa).

The first 20 residues, 1-20 (MNLKVLAVFVLCAILVVVTA), serve as a signal peptide directing secretion. Positions 21-39 (ERRGTETGVYKKDTLQDLI) are excised as a propeptide. The 36-residue stretch at 45–80 (CIDRFPTGTCKQVKKGGSCKNSDKYRMNCRKTCGLC) folds into the ShKT domain. Cystine bridges form between Cys-45–Cys-80, Cys-54–Cys-73, and Cys-63–Cys-77. Positions 68–69 (KY) are crucial for binding to potassium channels.

This sequence belongs to the sea anemone type 1 potassium channel toxin family. Type 1b subfamily.

It localises to the secreted. It is found in the nematocyst. Functionally, inhibits voltage-gated potassium channels (Kv1/KCNA). The sequence is that of U-actitoxin-Avd9a from Anemonia viridis (Snakelocks anemone).